The sequence spans 25 residues: Pregnancy-associated glycoprotein 72 (25 aa).

N-linked (GlcNAc...) asparagine glycans are attached at residues Asn-4 and Asn-21.

Belongs to the peptidase A1 family. In terms of processing, N-glycosylated. Expressed in chorionic epithelium (trophectoderm).

Its subcellular location is the secreted. It is found in the extracellular space. The chain is Pregnancy-associated glycoprotein 72 from Bison bison (American bison).